We begin with the raw amino-acid sequence, 262 residues long: 3-methyl-2-oxobutanoate hydroxymethyltransferase (262 aa).

Residues D43 and D82 each contribute to the Mg(2+) site. 3-methyl-2-oxobutanoate is bound by residues 43–44 (DS), D82, and K111. Residue E113 participates in Mg(2+) binding. E180 serves as the catalytic Proton acceptor.

The protein belongs to the PanB family. As to quaternary structure, homodecamer; pentamer of dimers. Mg(2+) is required as a cofactor.

The protein localises to the cytoplasm. It catalyses the reaction 3-methyl-2-oxobutanoate + (6R)-5,10-methylene-5,6,7,8-tetrahydrofolate + H2O = 2-dehydropantoate + (6S)-5,6,7,8-tetrahydrofolate. It participates in cofactor biosynthesis; coenzyme A biosynthesis. Catalyzes the reversible reaction in which hydroxymethyl group from 5,10-methylenetetrahydrofolate is transferred onto alpha-ketoisovalerate to form ketopantoate. This chain is 3-methyl-2-oxobutanoate hydroxymethyltransferase, found in Pyrobaculum aerophilum (strain ATCC 51768 / DSM 7523 / JCM 9630 / CIP 104966 / NBRC 100827 / IM2).